The following is a 419-amino-acid chain: Dual specificity mitogen-activated protein kinase kinase 7 (419 aa).

The residue at position 2 (A2) is an N-acetylalanine. Positions 2–30 form a coiled coil; it reads AASSLEQKLSRLEAKLKQENREARRRIDL. The span at 18–30 shows a compositional bias: basic and acidic residues; it reads KQENREARRRIDL. The disordered stretch occupies residues 18 to 76; sequence KQENREARRRIDLNLDISPQRPRPTLQLPLANDGGSRSPSSESSPQHPTPPARPRHMLG. Residues 36–63 are compositionally biased toward low complexity; sequence PQRPRPTLQLPLANDGGSRSPSSESSPQ. A d domain region spans residues 37–57; it reads QRPRPTLQLPLANDGGSRSPS. The Protein kinase domain maps to 120 to 380; sequence LENLGEMGSG…YNKLLEHSFI (261 aa). ATP-binding positions include 126–134 and K149; that span reads MGSGTCGQV. The Proton acceptor role is filled by D243. A Phosphoserine; by MAP3K modification is found at S271. Position 275 is a phosphothreonine; by MAP3K (T275). Positions 377 to 400 are DVD domain; it reads HSFIKRYETLEVDVASWFKDVMAK. The residue at position 411 (S411) is a Phosphoserine.

Belongs to the protein kinase superfamily. STE Ser/Thr protein kinase family. MAP kinase kinase subfamily. In terms of assembly, interacts with isoform 1 of VRK2. Interacts (via its D domain) with its substrates MAPK8/JNK1, MAPK9/JNK2 and MAPK10/JNK3. Interacts (via its DVD domain) with MAP3Ks activators like MAP3K5/ASK1 and MAP3K1/MEKK1. Interacts with MAPK8IP1/JIP1, MAPK8IP2/JIP2 and MAPK8IP3/JIP3 scaffold proteins. Interacts with RASSF7, the interaction promotes phosphorylation. Found in a complex with SH3RF1, RAC1, MAP3K11/MLK3, MAPK8IP1/JIP1 and MAPK8/JNK1. Found in a complex with SH3RF1, RAC2, MAP3K7/TAK1, MAPK8IP1/JIP1, MAPK8/JNK1 and MAPK9/JNK2. It depends on Mg(2+) as a cofactor. Post-translationally, activated by phosphorylation on Ser-271 and Thr-275 by MAP kinase kinase kinases (MAP3Ks). Ubiquitous; with highest level of expression in skeletal muscle. Isoform 3 is found at low levels in placenta, fetal liver, and skeletal muscle.

The protein localises to the nucleus. It localises to the cytoplasm. It catalyses the reaction L-seryl-[protein] + ATP = O-phospho-L-seryl-[protein] + ADP + H(+). It carries out the reaction L-threonyl-[protein] + ATP = O-phospho-L-threonyl-[protein] + ADP + H(+). The enzyme catalyses L-tyrosyl-[protein] + ATP = O-phospho-L-tyrosyl-[protein] + ADP + H(+). Activated by phosphorylation by specific MAP kinase kinase kinases such as MAP3K1/MEKK1, MAP3K3/MEKK3, MAP3K11/MLK3 and MAP3K12/DLK. Dual specificity protein kinase which acts as an essential component of the MAP kinase signal transduction pathway. Essential component of the stress-activated protein kinase/c-Jun N-terminal kinase (SAP/JNK) signaling pathway. With MAP2K4/MKK4, is the one of the only known kinase to directly activate the stress-activated protein kinase/c-Jun N-terminal kinases MAPK8/JNK1, MAPK9/JNK2 and MAPK10/JNK3. MAP2K4/MKK4 and MAP2K7/MKK7 both activate the JNKs by phosphorylation, but they differ in their preference for the phosphorylation site in the Thr-Pro-Tyr motif. MAP2K4/MKK4 shows preference for phosphorylation of the Tyr residue and MAP2K7/MKK7 for the Thr residue. The monophosphorylation of JNKs on the Thr residue is sufficient to increase JNK activity indicating that MAP2K7/MKK7 is important to trigger JNK activity, while the additional phosphorylation of the Tyr residue by MAP2K4/MKK4 ensures optimal JNK activation. Has a specific role in JNK signal transduction pathway activated by pro-inflammatory cytokines. The MKK/JNK signaling pathway is also involved in mitochondrial death signaling pathway, including the release cytochrome c, leading to apoptosis. Part of a non-canonical MAPK signaling pathway, composed of the upstream MAP3K12 kinase and downstream MAP kinases MAPK1/ERK2 and MAPK3/ERK1, that enhances the AP-1-mediated transcription of APP in response to APOE. This chain is Dual specificity mitogen-activated protein kinase kinase 7 (MAP2K7), found in Homo sapiens (Human).